The sequence spans 583 residues: Interactor of constitutive active ROPs 2, chloroplastic (583 aa).

A chloroplast-targeting transit peptide spans 1 to 55 (MQTPKPRPGSLEVPQKKSPASTPKTARKLKTSESDPVSSPNTKIRTPKTQSPKVV). Disordered stretches follow at residues 1–80 (MQTP…PELA) and 101–125 (EALK…NASE). Polar residues predominate over residues 34–52 (SDPVSSPNTKIRTPKTQSP). Coiled coils occupy residues 74-207 (GKTP…DAKE) and 238-516 (MKMS…AAAT). The span at 102-115 (ALKKEAQDQAEETK) shows a compositional bias: basic and acidic residues. Residues 518–583 (LSGGNNNNNS…IGVLLKKSQK (66 aa)) are disordered. Over residues 519 to 529 (SGGNNNNNSNG) the composition is skewed to low complexity. At Ser540 the chain carries Phosphoserine.

This sequence belongs to the ICR family. Interacts with ARAC8, ARAC11 and KIN13A in vitro, but not with ICR1 or SEC3A.

The protein resides in the plastid. It is found in the chloroplast. In terms of biological role, acts as a scaffold, mediating interaction of ROPs with different proteins. This Arabidopsis thaliana (Mouse-ear cress) protein is Interactor of constitutive active ROPs 2, chloroplastic (ICR2).